The chain runs to 353 residues: UPF0658 Golgi apparatus membrane protein C23H3.04 (353 aa).

The next 8 membrane-spanning stretches (helical) occupy residues Ile-39–Cys-59, Ser-76–Val-96, Asn-103–Val-123, Pro-172–Ala-192, Leu-226–Pro-246, Ala-249–Leu-269, Leu-281–Ile-301, and Met-318–Phe-338.

Belongs to the UPF0658 family.

The protein resides in the golgi apparatus membrane. The sequence is that of UPF0658 Golgi apparatus membrane protein C23H3.04 from Schizosaccharomyces pombe (strain 972 / ATCC 24843) (Fission yeast).